The primary structure comprises 448 residues: Phosphoglucosamine mutase (448 aa).

Serine 100 serves as the catalytic Phosphoserine intermediate. The Mg(2+) site is built by serine 100, aspartate 240, aspartate 242, and aspartate 244. Serine 100 carries the phosphoserine modification.

Belongs to the phosphohexose mutase family. Requires Mg(2+) as cofactor. In terms of processing, activated by phosphorylation.

It carries out the reaction alpha-D-glucosamine 1-phosphate = D-glucosamine 6-phosphate. Functionally, catalyzes the conversion of glucosamine-6-phosphate to glucosamine-1-phosphate. This Bacillus cereus (strain G9842) protein is Phosphoglucosamine mutase.